A 134-amino-acid polypeptide reads, in one-letter code: Ribosome-binding factor A (134 aa).

Belongs to the RbfA family. As to quaternary structure, monomer. Binds 30S ribosomal subunits, but not 50S ribosomal subunits or 70S ribosomes.

The protein resides in the cytoplasm. Functionally, one of several proteins that assist in the late maturation steps of the functional core of the 30S ribosomal subunit. Associates with free 30S ribosomal subunits (but not with 30S subunits that are part of 70S ribosomes or polysomes). Required for efficient processing of 16S rRNA. May interact with the 5'-terminal helix region of 16S rRNA. In Rhizobium etli (strain CIAT 652), this protein is Ribosome-binding factor A.